Reading from the N-terminus, the 317-residue chain is Ribosomal protein L11 methyltransferase (317 aa).

Residues Thr158, Gly179, Asp201, and Asn244 each contribute to the S-adenosyl-L-methionine site.

This sequence belongs to the methyltransferase superfamily. PrmA family.

Its subcellular location is the cytoplasm. It carries out the reaction L-lysyl-[protein] + 3 S-adenosyl-L-methionine = N(6),N(6),N(6)-trimethyl-L-lysyl-[protein] + 3 S-adenosyl-L-homocysteine + 3 H(+). Its function is as follows. Methylates ribosomal protein L11. This chain is Ribosomal protein L11 methyltransferase, found in Streptococcus mutans serotype c (strain ATCC 700610 / UA159).